A 243-amino-acid polypeptide reads, in one-letter code: Cyclin-dependent kinase 20 (243 aa).

The Protein kinase domain maps to 4–243; it reads YCILGRIGEG…IHLSCRFLSV (240 aa). ATP contacts are provided by residues 10-18 and Lys33; that span reads IGEGAHGIV. Asp127 functions as the Proton acceptor in the catalytic mechanism.

The protein belongs to the protein kinase superfamily. CMGC Ser/Thr protein kinase family. CDC2/CDKX subfamily. As to quaternary structure, monomer. Interacts with TBC1D32 and MAK.

The protein localises to the nucleus. The protein resides in the cytoplasm. It localises to the cell projection. Its subcellular location is the cilium. It catalyses the reaction L-seryl-[protein] + ATP = O-phospho-L-seryl-[protein] + ADP + H(+). It carries out the reaction L-threonyl-[protein] + ATP = O-phospho-L-threonyl-[protein] + ADP + H(+). Functionally, required for high-level Shh responses in the developing neural tube. Together with TBC1D32, controls the structure of the primary cilium by coordinating assembly of the ciliary membrane and axoneme, allowing GLI2 to be properly activated in response to SHH signaling. Involved in cell growth. Activates CDK2, a kinase involved in the control of the cell cycle, by phosphorylating residue 'Thr-160'. The chain is Cyclin-dependent kinase 20 (CDK20) from Macaca mulatta (Rhesus macaque).